Consider the following 185-residue polypeptide: Ribosome-recycling factor (185 aa).

Residues 143–163 (RKDGEAGEDEVARAEKDLDKS) are disordered.

The protein belongs to the RRF family.

Its subcellular location is the cytoplasm. In terms of biological role, responsible for the release of ribosomes from messenger RNA at the termination of protein biosynthesis. May increase the efficiency of translation by recycling ribosomes from one round of translation to another. The protein is Ribosome-recycling factor of Mycobacterium ulcerans (strain Agy99).